A 192-amino-acid chain; its full sequence is MSKRDYMNTSVQEPPLDYSFKSVQMIQDLISEEPRTGLRPVKYSKSGKSLTQSLWLNNNVLNDLKDFNQVVSQLLQHPENLAWIDLSFNDLTTIDPVLTTFFNLSVLYLHGNSIHRLGEVNKLAVLPRLRSLTLHGNPIEEEKGYRQYVLCNLPRITTFDFSGVTKADRSTAEVWKRMNIKPKKVRIKQDVL.

LRR repeat units follow at residues 49-71 (SLTQ…NQVV), 80-101 (NLAW…LTTF), and 103-124 (NLSV…NKLA). The LRRCT domain maps to 137–175 (NPIEEEKGYRQYVLCNLPRITTFDFSGVTKADRSTAEVW).

It is found in the cytoplasm. This chain is Leucine-rich repeat-containing protein 51, found in Rattus norvegicus (Rat).